Consider the following 81-residue polypeptide: MKVEILHKTPKGFLIARGKREIKIGSVVIFKNKKIGKVVDIFGPVAKPYIKILPINKDIEVSGTAYIKNDKSKYKNTEKKN.

To M.thermoautotrophicum MTH886.

This is an uncharacterized protein from Methanocaldococcus jannaschii (strain ATCC 43067 / DSM 2661 / JAL-1 / JCM 10045 / NBRC 100440) (Methanococcus jannaschii).